Here is a 386-residue protein sequence, read N- to C-terminus: Methionine import ATP-binding protein MetN 2 (386 aa).

An ABC transporter domain is found at 32–272 (VIFDDVGKVF…PQHDATRALL (241 aa)). 69–76 (GRSGAGKS) is a binding site for ATP.

It belongs to the ABC transporter superfamily. Methionine importer (TC 3.A.1.24) family. In terms of assembly, the complex is composed of two ATP-binding proteins (MetN), two transmembrane proteins (MetI) and a solute-binding protein (MetQ).

The protein localises to the cell inner membrane. It catalyses the reaction L-methionine(out) + ATP + H2O = L-methionine(in) + ADP + phosphate + H(+). It carries out the reaction D-methionine(out) + ATP + H2O = D-methionine(in) + ADP + phosphate + H(+). In terms of biological role, part of the ABC transporter complex MetNIQ involved in methionine import. Responsible for energy coupling to the transport system. This is Methionine import ATP-binding protein MetN 2 from Paraburkholderia xenovorans (strain LB400).